A 124-amino-acid polypeptide reads, in one-letter code: Glycine cleavage system H protein (124 aa).

A Lipoyl-binding domain is found at 24-106; it reads TYTMGITDHA…YDDGWLVKFK (83 aa). K65 is subject to N6-lipoyllysine.

This sequence belongs to the GcvH family. The glycine cleavage system is composed of four proteins: P, T, L and H. (R)-lipoate serves as cofactor.

The glycine cleavage system catalyzes the degradation of glycine. The H protein shuttles the methylamine group of glycine from the P protein to the T protein. This chain is Glycine cleavage system H protein, found in Ruthia magnifica subsp. Calyptogena magnifica.